Here is a 514-residue protein sequence, read N- to C-terminus: Na(+)/H(+) antiporter NhaB (514 aa).

Helical transmembrane passes span 23 to 43 (LALL…PFVA), 63 to 83 (PLLP…TSAA), 97 to 117 (LLLM…LFIF), 120 to 140 (LLLS…AAAF), 144 to 164 (FLDA…FYGI), 202 to 222 (LMMH…VGEP), 238 to 258 (FFLR…LTCM), 303 to 323 (AVIG…VGLI), 357 to 377 (LTVF…APII), 391 to 411 (LFYL…VGTI), 447 to 467 (ATPN…APLI), and 475 to 495 (VWMA…CVEF).

It belongs to the NhaB Na(+)/H(+) (TC 2.A.34) antiporter family.

Its subcellular location is the cell inner membrane. The enzyme catalyses 2 Na(+)(in) + 3 H(+)(out) = 2 Na(+)(out) + 3 H(+)(in). Functionally, na(+)/H(+) antiporter that extrudes sodium in exchange for external protons. This Salmonella paratyphi A (strain ATCC 9150 / SARB42) protein is Na(+)/H(+) antiporter NhaB.